We begin with the raw amino-acid sequence, 22 residues long: Mu-conotoxin GIIIC (22 aa).

3 disulfide bridges follow: Cys3–Cys15, Cys4–Cys20, and Cys10–Cys21. A 4-hydroxyproline mark is found at Pro6, Pro7, and Pro17. Position 22 is an alanine amide (Ala22).

This sequence belongs to the conotoxin M superfamily. In terms of tissue distribution, expressed by the venom duct.

Its subcellular location is the secreted. Functionally, mu-conotoxins block voltage-gated sodium channels (Nav). This toxin shows potent activity on Nav1.4/SCN4A (IC(50)=286 nM), and weak activity on mNav1.6/SCN8A. This Conus geographus (Geography cone) protein is Mu-conotoxin GIIIC.